We begin with the raw amino-acid sequence, 359 residues long: Nicotinate-nucleotide--dimethylbenzimidazole phosphoribosyltransferase (359 aa).

Catalysis depends on glutamate 318, which acts as the Proton acceptor.

This sequence belongs to the CobT family. In terms of assembly, homodimer.

The enzyme catalyses 5,6-dimethylbenzimidazole + nicotinate beta-D-ribonucleotide = alpha-ribazole 5'-phosphate + nicotinate + H(+). It functions in the pathway nucleoside biosynthesis; alpha-ribazole biosynthesis; alpha-ribazole from 5,6-dimethylbenzimidazole: step 1/2. Catalyzes the synthesis of alpha-ribazole-5'-phosphate from nicotinate mononucleotide (NAMN) and 5,6-dimethylbenzimidazole (DMB). The sequence is that of Nicotinate-nucleotide--dimethylbenzimidazole phosphoribosyltransferase from Shigella flexneri serotype 5b (strain 8401).